A 539-amino-acid polypeptide reads, in one-letter code: Protein pim1 (539 aa).

Positions 1 to 53 (MTSNRSTRSSTKREEVSKNGVEKRELDESDVMKNGKKPVKRAKVSSLPKPVRV) are disordered. Residues 11-33 (TKREEVSKNGVEKRELDESDVMK) show a composition bias toward basic and acidic residues. A compositionally biased stretch (basic residues) spans 34–43 (NGKKPVKRAK). RCC1 repeat units lie at residues 70–125 (RLNV…ALSH), 127–191 (GRVY…AITD), 192–243 (NGCC…ALTT), 244–296 (TGKV…AIDN), 298–353 (GRVY…ALLE), 354–417 (DGRV…AVTS), and 419–472 (GKVY…IAGI). A disordered region spans residues 478 to 539 (EPVANGIKSE…SVLEPSSTTA (62 aa)). The span at 486–504 (SEPENEKKLKTEETSKTDD) shows a compositional bias: basic and acidic residues. Polar residues predominate over residues 514 to 525 (VTSNGEPSTATS).

As to quaternary structure, oligomer of dis3, pim1 and spi1. Interacts with ned1.

It localises to the nucleus. Its function is as follows. Promotes the exchange of Ran(spi1)-bound GDP by GTP. Involved in the control of mitosis. Regulates a variety of nuclear events, including mitotic check-point, chromosome decondensation and mRNA processing/transport. The polypeptide is Protein pim1 (pim1) (Schizosaccharomyces pombe (strain 972 / ATCC 24843) (Fission yeast)).